The chain runs to 286 residues: Polyamine aminopropyltransferase (286 aa).

Residues 5-242 (DNWFTEVLEE…GWWSATLASK (238 aa)) enclose the PABS domain. Residue Q35 coordinates S-methyl-5'-thioadenosine. The spermidine site is built by H66 and D90. Residues D110 and 141-142 (DG) each bind S-methyl-5'-thioadenosine. The active-site Proton acceptor is D160. 160-163 (DSTD) serves as a coordination point for spermidine.

This sequence belongs to the spermidine/spermine synthase family. As to quaternary structure, homodimer or homotetramer.

The protein localises to the cytoplasm. The enzyme catalyses S-adenosyl 3-(methylsulfanyl)propylamine + putrescine = S-methyl-5'-thioadenosine + spermidine + H(+). Its pathway is amine and polyamine biosynthesis; spermidine biosynthesis; spermidine from putrescine: step 1/1. Its function is as follows. Catalyzes the irreversible transfer of a propylamine group from the amino donor S-adenosylmethioninamine (decarboxy-AdoMet) to putrescine (1,4-diaminobutane) to yield spermidine. This chain is Polyamine aminopropyltransferase, found in Alkalilimnicola ehrlichii (strain ATCC BAA-1101 / DSM 17681 / MLHE-1).